We begin with the raw amino-acid sequence, 1036 residues long: Nitrogen catabolic enzyme regulatory protein (1036 aa).

A compositionally biased stretch (low complexity) spans 1 to 17 (MAASTTTPTATTRPFFT). Disordered regions lie at residues 1–126 (MAAS…HTQS), 207–240 (TDRTHRFSESAPQKSTSGIARLRKSSEQTQSQGS), 256–298 (TPAG…QSQH), 318–351 (GYLPRHLRKTSIDETSKRNPNRKRPADFSPHVSA), 590–743 (SSQG…PTTC), 792–976 (RGSG…PTTQ), and 1000–1028 (GMPNGQAGQMMGASSSSGPGSGPSRTGAE). Basic and acidic residues predominate over residues 23–34 (TEHDFRFPRRPG). The span at 45 to 56 (AAMSSSSANNNH) shows a compositional bias: low complexity. 3 consecutive repeat copies span residues 49-55 (SSSANNN), 87-92 (SSSNNN), and 105-110 (SSSNNN). The interval 49–110 (SSSANNNHNQ…INHQSSSNNN (62 aa)) is 3 X approximate repeats. Residues 100–114 (NINHQSSSNNNISKN) are compositionally biased toward low complexity. Positions 652–661 (PRSQSQSFRQ) are enriched in polar residues. Over residues 703-714 (SSGLSSVPASRP) the composition is skewed to low complexity. Polar residues predominate over residues 723-736 (QGSTTNLQGAAGNS). The segment at 743 to 767 (CTNCFTQTTPLWRRNPDGQPLCNAC) adopts a GATA-type zinc-finger fold. The segment covering 802–827 (GTSTRSKKNASMSAAARKNSTLSITS) has biased composition (polar residues). 2 stretches are compositionally biased toward low complexity: residues 828-861 (NANNQPPAQVATPPAQQQVRASSVNESESPASGP) and 868-899 (AGSTPTSYHGSTGSTSGAVGGKSVIPIASAPP). A compositionally biased stretch (polar residues) spans 927–961 (SAGSDQPVSAGAVSSSGMDVDSPANSTGSNETMPT). Residues 1000 to 1023 (GMPNGQAGQMMGASSSSGPGSGPS) show a composition bias toward low complexity.

In terms of assembly, interacts with nmr.

The protein localises to the nucleus. Its function is as follows. Major nitrogen regulatory protein. During conditions of nitrogen limitation it turns on the expression of genes for enzymes which are required for the use of a variety of secondary nitrogen sources, including nitrates, purines, amino acids, and proteins. The protein is Nitrogen catabolic enzyme regulatory protein (nit-2) of Neurospora crassa (strain ATCC 24698 / 74-OR23-1A / CBS 708.71 / DSM 1257 / FGSC 987).